Consider the following 774-residue polypeptide: MAEVAVGQASDLVPSEMDHEVIYSHLQGPLEGTIEPATPTEVVSNGAPLQPAPAELANSQGGAHVQPAPAEVVSSQDGLPTLQPLPPASIDLTEEVQPSEENMEVVNPGTSEEPSQGSGANPTAGAARSVSMNNFISGLQRLHNMLELLRPPPADHSVGPIRTRRRMAPILRARAGESQRQDNGRYVPHTPLYAYFQVSRSQPYPLPAAHDSETRNPPSGTDSDSDGSAEDEEVVVQAEEPEANIPEQGVIATDQEATSVTGDDAVPKESPQKPNMLSAMEDEEGETCTICLEQWTNAGDHRISALRCGHLFGFRCISKWLKGQTRKCPQCNKKAKHSDIVVIYARSLRALDTSEQERMKSDLLNEQMLRKQAELESAQCRLQLQVLIDKCTKLNSRVQDLEKFVVRHQNSAAQQCSRSKALCGKCLSSSQSPGKYSSEKTFTISQTGKCRILAYCDGLSCLVASQPSPQASFLPGFGVKMLSTANMKSSQYIPMHNKQIRGLSFSSQSKGLLLSASLDCTIKLTSLETNTVVQTYNTGRPVWSCCWCLDENNYVYAGLASGSILIYDLRNTNTYIQELVPQKARCPLVSLSYLPKAAVAAFPYGGVLAGTLENASFWELKSDFSHKPHVLSLEPGGFVDFQTESSTRHCLVTYRPDKSHNTVRTVLLEMSYKLDDAGEPVCSCLPVQTFLGGPTCKLLTKSAIFQSPENNGNVLVCTGDEASQSTLLWNAGSGLLLQNLKAGEPVLDICPFETNQNSYLATLTEKTVHMYKWE.

2 disordered regions span residues glycine 32–alanine 126 and proline 203–glutamate 281. Phosphoserine; by ATM and ATR is present on residues serine 59 and serine 75. Over residues leucine 92–methionine 103 the composition is skewed to acidic residues. The segment covering proline 108–asparagine 121 has biased composition (polar residues). A compositionally biased stretch (acidic residues) spans serine 223 to glutamate 242. Residues cysteine 288–asparagine 332 form an RING-type; degenerate zinc finger. Residues arginine 358–lysine 403 adopt a coiled-coil conformation. 3 WD repeats span residues isoleucine 493–threonine 535, tyrosine 536–aspartate 568, and lysine 583–proline 628.

Interacts with MDM2 and p53/TP53. Binds to the RPA complex via direct interaction with RPA2. Interacts with RAD51. Phosphorylated at Ser-59 and Ser-75 upon DNA damage by ATM or ATR. ATM phosphorylation occurs at early times upon DNA damage, while ATR is the major kinase at later times. Phosphorylation by ATM and ATR is required to stabilize p53/TP53. Part of the phosphorylation depends upon RPA2 presence.

The protein resides in the nucleus. It localises to the PML body. Its subcellular location is the cytoplasm. The enzyme catalyses S-ubiquitinyl-[E2 ubiquitin-conjugating enzyme]-L-cysteine + [acceptor protein]-L-lysine = [E2 ubiquitin-conjugating enzyme]-L-cysteine + N(6)-ubiquitinyl-[acceptor protein]-L-lysine.. The protein operates within protein modification; protein ubiquitination. E3 ubiquitin-protein ligase required for the repair of DNA interstrand cross-links (ICL) in response to DNA damage. Plays a key role in RPA-mediated DNA damage signaling and repair. Acts by mediating ubiquitination of the RPA complex (RPA1, RPA2 and RPA3 subunits) and RAD51 at stalled replication forks, leading to remove them from DNA damage sites and promote homologous recombination. Also mediates the ubiquitination of p53/TP53 in the late response to DNA damage, and acts as a positive regulator of p53/TP53 stability, thereby regulating the G1/S DNA damage checkpoint. May act by catalyzing the formation of short polyubiquitin chains on p53/TP53 that are not targeted to the proteasome. In response to ionizing radiation, interacts with MDM2 and enhances p53/TP53 ubiquitination, possibly by restricting MDM2 from extending polyubiquitin chains on ubiquitinated p53/TP53. Required to translesion DNA synthesis across DNA-protein cross-link adducts by catalyzing ubiquitination of proteins on single-stranded DNA (ssDNA). The chain is E3 ubiquitin-protein ligase RFWD3 (Rfwd3) from Mus musculus (Mouse).